A 346-amino-acid polypeptide reads, in one-letter code: 3-dehydroquinate synthase (346 aa).

Residues 62–67, 96–100, 120–121, K133, K142, and 160–163 each bind NAD(+); these read DGEEYK, GVISD, TT, and FLRT. Zn(2+) is bound by residues E175, H234, and H251.

The protein belongs to the sugar phosphate cyclases superfamily. Dehydroquinate synthase family. The cofactor is Co(2+). Requires Zn(2+) as cofactor. It depends on NAD(+) as a cofactor.

It localises to the cytoplasm. It carries out the reaction 7-phospho-2-dehydro-3-deoxy-D-arabino-heptonate = 3-dehydroquinate + phosphate. It participates in metabolic intermediate biosynthesis; chorismate biosynthesis; chorismate from D-erythrose 4-phosphate and phosphoenolpyruvate: step 2/7. Catalyzes the conversion of 3-deoxy-D-arabino-heptulosonate 7-phosphate (DAHP) to dehydroquinate (DHQ). This chain is 3-dehydroquinate synthase, found in Campylobacter curvus (strain 525.92).